The sequence spans 293 residues: Probable E3 ubiquitin-protein ligase RNF144A-A (293 aa).

The segment at 16-237 (PLVSCKLCLG…YDKGPCRNKL (222 aa)) is TRIAD supradomain. Residues cysteine 20, cysteine 23, cysteine 43, cysteine 46, cysteine 111, cysteine 116, cysteine 135, cysteine 138, cysteine 143, cysteine 146, histidine 151, cysteine 156, cysteine 186, and cysteine 189 each contribute to the Zn(2+) site. The RING-type 1 zinc-finger motif lies at 20-70 (CKLCLGEFPLEQMTTITQCQCVFCTMCLKQYVELLIKEGFETAISCPDSAC). The IBR-type zinc-finger motif lies at 91 to 156 (QRYRKLQFEK…KASWHPDQDC (66 aa)). The RING-type 2; atypical zinc finger occupies 186-215 (CPKCKVYIERDEGCAQMMCKNCKHAFCWYC). Residue cysteine 199 is part of the active site. Zn(2+) contacts are provided by cysteine 204, cysteine 207, cysteine 212, cysteine 215, histidine 227, and cysteine 233. Residues 251–271 (VVGIFAGFGLLLLVASPFLLL) form a helical membrane-spanning segment.

It belongs to the RBR family. RNF144 subfamily.

It localises to the membrane. It carries out the reaction [E2 ubiquitin-conjugating enzyme]-S-ubiquitinyl-L-cysteine + [acceptor protein]-L-lysine = [E2 ubiquitin-conjugating enzyme]-L-cysteine + [acceptor protein]-N(6)-ubiquitinyl-L-lysine.. Its pathway is protein modification; protein ubiquitination. E3 ubiquitin-protein ligase which accepts ubiquitin from E2 ubiquitin-conjugating enzymes ube2l3 and ube2l6 in the form of a thioester and then directly transfers the ubiquitin to targeted substrates. The sequence is that of Probable E3 ubiquitin-protein ligase RNF144A-A (rnf144aa) from Danio rerio (Zebrafish).